A 233-amino-acid polypeptide reads, in one-letter code: Purine nucleoside phosphorylase DeoD-type (233 aa).

A purine D-ribonucleoside is bound at residue H4. Phosphate-binding positions include G20, R24, R43, and 87 to 90; that span reads RVGS. A purine D-ribonucleoside is bound by residues 178-180 and 202-203; these read EME and SD. Residue D203 is the Proton donor of the active site.

The protein belongs to the PNP/UDP phosphorylase family. Homohexamer; trimer of homodimers.

It catalyses the reaction a purine D-ribonucleoside + phosphate = a purine nucleobase + alpha-D-ribose 1-phosphate. The enzyme catalyses a purine 2'-deoxy-D-ribonucleoside + phosphate = a purine nucleobase + 2-deoxy-alpha-D-ribose 1-phosphate. Catalyzes the reversible phosphorolytic breakdown of the N-glycosidic bond in the beta-(deoxy)ribonucleoside molecules, with the formation of the corresponding free purine bases and pentose-1-phosphate. This is Purine nucleoside phosphorylase DeoD-type from Bacillus subtilis (strain 168).